Here is a 518-residue protein sequence, read N- to C-terminus: MNMQWVGASMMLLIPVLFFLGSLTNERRANWNLASAISLLGLFLSMFLGIAVYFEWVNLSISGQWVGVSKMSLVMLGLVCFIAFVNVRYSSAYMAGNVDEEKRYLRWLMVTLGCVVTVIISNHMLVLMVAWIAISLSLHRLLVFFPNRQRAVLAAHKKFIFARVAEACLLGAILILYYEHGTWFISDIYQNVSLSTSLTTLDQFAAMLLALAALVKCAQLPLHGWLIQVVEAPTPVSALLHAGIINLGGYLLIIFAPLIVLSDMAQWILLIVGGITTVLAALVMMTRTSVKVRLAWSTMSQMGLMLVECALGLFELALLHLVAHSCYKAYAFLNAGSEVESSMKRRLSRAVAPSVKEWWFAGIMSAAMVVGLIWLADLSGPYSPWLLFAIAVTLLIAERRGRLTSSSVIGMVGLGVVLLVVYTLQKNGASLIVSSMETSVGWKGDLWIGFLLVMFMVGYFLLRYHSEHIWMRKVRRAFYAGFYLDEWVTRLNLRIYPTRLPVRFKPKKLQVPKEELFQ.

Transmembrane regions (helical) follow at residues 3-23 (MQWVGASMMLLIPVLFFLGSL), 37-57 (ISLLGLFLSMFLGIAVYFEWV), 65-85 (WVGVSKMSLVMLGLVCFIAFV), 114-134 (CVVTVIISNHMLVLMVAWIAI), 165-185 (AEACLLGAILILYYEHGTWFI), 207-227 (MLLALAALVKCAQLPLHGWLI), 242-262 (AGIINLGGYLLIIFAPLIVLS), 264-284 (MAQWILLIVGGITTVLAALVM), 302-322 (MGLMLVECALGLFELALLHLV), 358-378 (WWFAGIMSAAMVVGLIWLADL), 379-399 (SGPYSPWLLFAIAVTLLIAER), 403-423 (LTSSSVIGMVGLGVVLLVVYT), and 442-462 (WKGDLWIGFLLVMFMVGYFLL).

The protein belongs to the inorganic carbon transporter (TC 9.A.2) DabB family. As to quaternary structure, forms a complex with DabA.

Its subcellular location is the cell inner membrane. Its activity is regulated as follows. Intracellular DIC accumulation is sensitive to CCCP (carbonyl cyanide-m-chlorophenylhydrazone) and DCCD (N,N-dicyclohexylcarbodiimide) and therefore likely driven by either proton gradient, ATP, or both. Functionally, part of an energy-coupled inorganic carbon pump involved in transport of dissolved inorganic carbon (DIC) with downstream gene dabA (Tcr_0854); has been suggested to be a proton-DIC symporter. This Hydrogenovibrio crunogenus (strain DSM 25203 / XCL-2) (Thiomicrospira crunogena) protein is Probable inorganic carbon transporter subunit DabB.